A 327-amino-acid polypeptide reads, in one-letter code: MTTPAYLLANFGGPRHAKDLQEFLISLLTDRDVTGTFLPRVLHRHLFTFIAKKRVPKVLPQYQSLQNWSPIYFDTETLAKTLSEILRAPVIPFHRYLPSTHEKTLLALRTLHTRHVIGIPLFPHFTYSVTGSIVRFFMKHVPEIPISWIPQFGSDSKFVSLITCHIRDFLQKLGILEKECCFLFSVHGLPVRYISQGDPYSKQCYESFSAITTNFKQSENFLCFQSKFGPGKWLSPSTAQLCQNIDTDKPNVIVVPFGFISDHLETLYEIERDYLPLLRSRGYRALRIPAIYSSPLWVSTLVDIVKENSTVVAEELIKSGKKHTGIR.

The Fe cation site is built by His-187 and Glu-265.

The protein belongs to the ferrochelatase family.

It is found in the cytoplasm. The catalysed reaction is heme b + 2 H(+) = protoporphyrin IX + Fe(2+). The protein operates within porphyrin-containing compound metabolism; protoheme biosynthesis; protoheme from protoporphyrin-IX: step 1/1. Its function is as follows. Catalyzes the ferrous insertion into protoporphyrin IX. This Chlamydia pneumoniae (Chlamydophila pneumoniae) protein is Ferrochelatase.